A 582-amino-acid polypeptide reads, in one-letter code: Bifunctional lycopene cyclase/phytoene synthase (582 aa).

Residues 1 to 261 (MNQNGTRLCY…VVLGLVGCDY (261 aa)) form a lycopene beta-cyclase region. The next 6 membrane-spanning stretches (helical) occupy residues 34–54 (CTYT…FFTA), 59–79 (KICI…SYLI), 99–121 (IPIE…YCIF), 142–162 (YVVA…LLLG), 170–190 (LILV…YPFL), and 242–262 (ALFF…CDYA). The phytoene synthase stretch occupies residues 268–582 (YESLSQPASD…LLSALVYRLE (315 aa)).

This sequence in the N-terminal section; belongs to the lycopene beta-cyclase family. It in the C-terminal section; belongs to the phytoene/squalene synthase family.

It is found in the membrane. It carries out the reaction all-trans-lycopene = gamma-carotene. It catalyses the reaction gamma-carotene = all-trans-beta-carotene. The catalysed reaction is 2 (2E,6E,10E)-geranylgeranyl diphosphate = 15-cis-phytoene + 2 diphosphate. Its pathway is carotenoid biosynthesis; beta-carotene biosynthesis. It participates in carotenoid biosynthesis; phytoene biosynthesis; all-trans-phytoene from geranylgeranyl diphosphate: step 1/1. Its function is as follows. Bifunctional enzyme that catalyzes the reactions from geranylgeranyl diphosphate to phytoene (phytoene synthase) and lycopene to beta-carotene via the intermediate gamma-carotene (lycopene cyclase). The chain is Bifunctional lycopene cyclase/phytoene synthase from Aspergillus niger (strain ATCC MYA-4892 / CBS 513.88 / FGSC A1513).